Consider the following 279-residue polypeptide: Pantothenate synthetase (279 aa).

Residue M30–H37 coordinates ATP. H37 serves as the catalytic Proton donor. Q61 lines the (R)-pantoate pocket. Q61 serves as a coordination point for beta-alanine. G147–D150 lines the ATP pocket. Position 153 (Q153) interacts with (R)-pantoate. ATP contacts are provided by residues A176 and L184–R187.

The protein belongs to the pantothenate synthetase family. In terms of assembly, homodimer.

It localises to the cytoplasm. It carries out the reaction (R)-pantoate + beta-alanine + ATP = (R)-pantothenate + AMP + diphosphate + H(+). It functions in the pathway cofactor biosynthesis; (R)-pantothenate biosynthesis; (R)-pantothenate from (R)-pantoate and beta-alanine: step 1/1. Its function is as follows. Catalyzes the condensation of pantoate with beta-alanine in an ATP-dependent reaction via a pantoyl-adenylate intermediate. The sequence is that of Pantothenate synthetase from Sphingopyxis alaskensis (strain DSM 13593 / LMG 18877 / RB2256) (Sphingomonas alaskensis).